We begin with the raw amino-acid sequence, 155 residues long: SsrA-binding protein (155 aa).

The protein belongs to the SmpB family.

Its subcellular location is the cytoplasm. Its function is as follows. Required for rescue of stalled ribosomes mediated by trans-translation. Binds to transfer-messenger RNA (tmRNA), required for stable association of tmRNA with ribosomes. tmRNA and SmpB together mimic tRNA shape, replacing the anticodon stem-loop with SmpB. tmRNA is encoded by the ssrA gene; the 2 termini fold to resemble tRNA(Ala) and it encodes a 'tag peptide', a short internal open reading frame. During trans-translation Ala-aminoacylated tmRNA acts like a tRNA, entering the A-site of stalled ribosomes, displacing the stalled mRNA. The ribosome then switches to translate the ORF on the tmRNA; the nascent peptide is terminated with the 'tag peptide' encoded by the tmRNA and targeted for degradation. The ribosome is freed to recommence translation, which seems to be the essential function of trans-translation. In Bacillus cereus (strain G9842), this protein is SsrA-binding protein.